The sequence spans 428 residues: Glial fibrillary acidic protein (428 aa).

A head region spans residues 1–68 (MERRRVTSAT…KETRASERAE (68 aa)). Thr-7 is modified (phosphothreonine; by AURKB and ROCK1). Arg-12 is modified (omega-N-methylarginine). Ser-13 carries the post-translational modification Phosphoserine; by AURKB and ROCK1. Arg-26 and Arg-32 each carry citrulline. Phosphoserine; by AURKB and ROCK1 is present on Ser-34. One can recognise an IF rod domain in the interval 65-373 (ERAEMMELND…KLLEGEENRI (309 aa)). A coil 1A region spans residues 69–100 (MMELNDRFASYIEKVRFLEQQNKALAAELNQL). Ser-78 is modified (phosphoserine). A linker 1 region spans residues 101 to 111 (RAKEPTKLADV). 2 positions are modified to phosphothreonine: Thr-106 and Thr-146. The coil 1B stretch occupies residues 112 to 210 (YQAELRELRL…EEEVRELQEQ (99 aa)). Residues 211 to 226 (LAQQQVHVEMDVAKPD) form a linker 12 region. Positions 227–248 (LTAALREIRTQYEAVASSNMHE) are coil 2A. The interval 249 to 252 (AEEW) is linker 2. Residues 253-373 (YRSKFADLND…KLLEGEENRI (121 aa)) are coil 2B. At Arg-266 the chain carries Citrulline. Phosphoserine is present on Ser-319. The tail stretch occupies residues 374-428 (TIPVQTFSNLQIRETSLDTKSVSEGHLKRNIVVKTVEMRDGEVIKESKQEHKDVM). Thr-379 is subject to Phosphothreonine. Ser-381 is modified (phosphoserine). Citrulline is present on residues Arg-402 and Arg-412.

Belongs to the intermediate filament family. Interacts with SYNM. In terms of processing, phosphorylated by PKN1.

The protein resides in the cytoplasm. Its function is as follows. GFAP, a class-III intermediate filament, is a cell-specific marker that, during the development of the central nervous system, distinguishes astrocytes from other glial cells. In Bos taurus (Bovine), this protein is Glial fibrillary acidic protein (GFAP).